We begin with the raw amino-acid sequence, 226 residues long: Lipoprotein-releasing system ATP-binding protein LolD (226 aa).

The ABC transporter domain maps to 5–225; that stretch reads FALSNISKFF…EINSCMLSSV (221 aa). An ATP-binding site is contributed by 40–47; it reads GRSGSGKS.

It belongs to the ABC transporter superfamily. Lipoprotein translocase (TC 3.A.1.125) family. The complex is composed of two ATP-binding proteins (LolD) and two transmembrane proteins (LolC and LolE).

It localises to the cell inner membrane. Part of the ABC transporter complex LolCDE involved in the translocation of mature outer membrane-directed lipoproteins, from the inner membrane to the periplasmic chaperone, LolA. Responsible for the formation of the LolA-lipoprotein complex in an ATP-dependent manner. This is Lipoprotein-releasing system ATP-binding protein LolD from Ehrlichia canis (strain Jake).